Reading from the N-terminus, the 388-residue chain is Arginine biosynthesis bifunctional protein ArgJ (388 aa).

Residues Thr-150, Lys-172, Thr-183, Glu-263, Asn-383, and Thr-388 each coordinate substrate. Thr-183 functions as the Nucleophile in the catalytic mechanism.

The protein belongs to the ArgJ family. Heterotetramer of two alpha and two beta chains.

Its subcellular location is the cytoplasm. It carries out the reaction N(2)-acetyl-L-ornithine + L-glutamate = N-acetyl-L-glutamate + L-ornithine. It catalyses the reaction L-glutamate + acetyl-CoA = N-acetyl-L-glutamate + CoA + H(+). The protein operates within amino-acid biosynthesis; L-arginine biosynthesis; L-ornithine and N-acetyl-L-glutamate from L-glutamate and N(2)-acetyl-L-ornithine (cyclic): step 1/1. It participates in amino-acid biosynthesis; L-arginine biosynthesis; N(2)-acetyl-L-ornithine from L-glutamate: step 1/4. Its function is as follows. Catalyzes two activities which are involved in the cyclic version of arginine biosynthesis: the synthesis of N-acetylglutamate from glutamate and acetyl-CoA as the acetyl donor, and of ornithine by transacetylation between N(2)-acetylornithine and glutamate. This Corynebacterium efficiens (strain DSM 44549 / YS-314 / AJ 12310 / JCM 11189 / NBRC 100395) protein is Arginine biosynthesis bifunctional protein ArgJ.